The chain runs to 280 residues: CAG pathogenicity island protein 12 (280 aa).

A signal peptide spans 1–20 (MKLRASVLIGATILCLILSA). A lipid anchor (N-palmitoyl cysteine) is attached at Cys21. Cys21 is lipidated: S-diacylglycerol cysteine.

It localises to the cell membrane. The sequence is that of CAG pathogenicity island protein 12 (cagT) from Helicobacter pylori (strain ATCC 700392 / 26695) (Campylobacter pylori).